The following is a 324-amino-acid chain: Brorin (324 aa).

The N-terminal stretch at 1–27 (MPSSSAMAVGALSSSLLVTCCLMVALC) is a signal peptide. The segment at 37-126 (AQAPEQPGQE…TPQGEPPAAA (90 aa)) is disordered. Basic and acidic residues-rich tracts occupy residues 44–56 (GQEKREHASRDSP) and 64–78 (RASRDEGSSARDWKS). Residues 92 to 107 (KQKQAWAAQGGSAKAA) are compositionally biased toward low complexity. The Mediates cell adhesion motif lies at 114–116 (RGD). 2 consecutive VWFC domains span residues 152–211 (KGCV…PQCK) and 215–273 (NYCE…PICK).

As to quaternary structure, peripherally associated with AMPAR complex. AMPAR complex consists of an inner core made of 4 pore-forming GluA/GRIA proteins (GRIA1, GRIA2, GRIA3 and GRIA4) and 4 major auxiliary subunits arranged in a twofold symmetry. One of the two pairs of distinct binding sites is occupied either by CNIH2, CNIH3 or CACNG2, CACNG3. The other harbors CACNG2, CACNG3, CACNG4, CACNG8 or GSG1L. This inner core of AMPAR complex is complemented by outer core constituents binding directly to the GluA/GRIA proteins at sites distinct from the interaction sites of the inner core constituents. Outer core constituents include at least PRRT1, PRRT2, CKAMP44/SHISA9, FRRS1L and NRN1. The proteins of the inner and outer core serve as a platform for other, more peripherally associated AMPAR constituents, including VWC2. Alone or in combination, these auxiliary subunits control the gating and pharmacology of the AMPAR complex and profoundly impact their biogenesis and protein processing. As to expression, predominantly expressed in the brain (at protein level). It is expressed in the neurons but not the glial cells.

It is found in the secreted. It localises to the extracellular space. The protein localises to the extracellular matrix. The protein resides in the basement membrane. Its subcellular location is the synapse. Functionally, BMP antagonist which may play a role in neural development. Promotes cell adhesion. The sequence is that of Brorin (Vwc2) from Mus musculus (Mouse).